The primary structure comprises 115 residues: Prefoldin subunit beta (115 aa).

It belongs to the prefoldin subunit beta family. Heterohexamer of two alpha and four beta subunits.

The protein resides in the cytoplasm. In terms of biological role, molecular chaperone capable of stabilizing a range of proteins. Seems to fulfill an ATP-independent, HSP70-like function in archaeal de novo protein folding. In Methanococcus aeolicus (strain ATCC BAA-1280 / DSM 17508 / OCM 812 / Nankai-3), this protein is Prefoldin subunit beta.